Here is a 99-residue protein sequence, read N- to C-terminus: Aspartyl/glutamyl-tRNA(Asn/Gln) amidotransferase subunit C (99 aa).

The protein belongs to the GatC family. Heterotrimer of A, B and C subunits.

It carries out the reaction L-glutamyl-tRNA(Gln) + L-glutamine + ATP + H2O = L-glutaminyl-tRNA(Gln) + L-glutamate + ADP + phosphate + H(+). It catalyses the reaction L-aspartyl-tRNA(Asn) + L-glutamine + ATP + H2O = L-asparaginyl-tRNA(Asn) + L-glutamate + ADP + phosphate + 2 H(+). In terms of biological role, allows the formation of correctly charged Asn-tRNA(Asn) or Gln-tRNA(Gln) through the transamidation of misacylated Asp-tRNA(Asn) or Glu-tRNA(Gln) in organisms which lack either or both of asparaginyl-tRNA or glutaminyl-tRNA synthetases. The reaction takes place in the presence of glutamine and ATP through an activated phospho-Asp-tRNA(Asn) or phospho-Glu-tRNA(Gln). This is Aspartyl/glutamyl-tRNA(Asn/Gln) amidotransferase subunit C from Burkholderia thailandensis (strain ATCC 700388 / DSM 13276 / CCUG 48851 / CIP 106301 / E264).